Consider the following 571-residue polypeptide: Potassium-transporting ATPase potassium-binding subunit (571 aa).

11 consecutive transmembrane segments (helical) span residues 3 to 23 (LIGW…VKPL), 64 to 84 (LGYG…LYAI), 135 to 155 (LGLT…AVAL), 179 to 199 (LYVL…QGMP), 254 to 274 (LANL…TNVF), 284 to 304 (GWAI…VTYA), 330 to 350 (FGIV…CGAV), 357 to 376 (FTAL…EIIV), 421 to 441 (MLAI…ATVL), 488 to 508 (LALG…AIAG), and 527 to 547 (GGLF…LTFF).

Belongs to the KdpA family. In terms of assembly, the system is composed of three essential subunits: KdpA, KdpB and KdpC.

It is found in the cell inner membrane. Part of the high-affinity ATP-driven potassium transport (or Kdp) system, which catalyzes the hydrolysis of ATP coupled with the electrogenic transport of potassium into the cytoplasm. This subunit binds the periplasmic potassium ions and delivers the ions to the membrane domain of KdpB through an intramembrane tunnel. The sequence is that of Potassium-transporting ATPase potassium-binding subunit from Methylorubrum populi (strain ATCC BAA-705 / NCIMB 13946 / BJ001) (Methylobacterium populi).